A 188-amino-acid chain; its full sequence is UPF0301 protein azo3459 (188 aa).

This sequence belongs to the UPF0301 (AlgH) family.

This is UPF0301 protein azo3459 from Azoarcus sp. (strain BH72).